The following is a 310-amino-acid chain: 4-hydroxyproline 2-epimerase (310 aa).

Cys88 acts as the Proton acceptor in catalysis. Substrate-binding positions include 89 to 90 (GH), His208, and Asp232. The active-site Proton donor is the Cys236. Substrate is bound at residue 237–238 (GT).

The protein belongs to the proline racemase family.

The catalysed reaction is trans-4-hydroxy-L-proline = cis-4-hydroxy-D-proline. Functionally, catalyzes the epimerization of trans-4-hydroxy-L-proline (t4LHyp) to cis-4-hydroxy-D-proline (c4DHyp). Is likely involved in a degradation pathway that converts t4LHyp to alpha-ketoglutarate. Displays no proline racemase activity. In Acinetobacter baumannii (strain ATCC 17978 / DSM 105126 / CIP 53.77 / LMG 1025 / NCDC KC755 / 5377), this protein is 4-hydroxyproline 2-epimerase.